Here is a 339-residue protein sequence, read N- to C-terminus: MQMNSLNDPKHLVKAVVRGEIKCLDVRAQSKYEISHLRKSVNIPSEKISKCWYQLPAKQEELFVVEDQGDKIETEETGTCAQQLKKRGWNIAGHFMFSHKIWEDLSLPQNELLESGPNRNLLFEPCPYLKEVMPVVEKGIKTNNARVLDIGCGSGRDLAWICFRESGKHWMVSALDAEKRAIQRFSELFSGLGLEDRIEGKKVAKVDASGLWKLYTRDGKQEPNATAISLADMLADFQNVPEGDVYKYDLVLQIRFLNRALLRQSSSLLRNNGFLFLCTFVNDGVHQYEHPRGSDHRFEKGEAAAIVSESDGRIRVLKDEIGFIEDGRPVQILLAQKVE.

One can recognise a Rhodanese domain in the interval 17–111; that stretch reads VRGEIKCLDV…WEDLSLPQNE (95 aa).

This is an uncharacterized protein from Schizosaccharomyces pombe (strain 972 / ATCC 24843) (Fission yeast).